The chain runs to 773 residues: Acyl-homoserine lactone acylase PvdQ (773 aa).

Residues 1–23 (MSRALPGFLFAGLSVAVVLPAQA) form the signal peptide. A propeptide spans 200–221 (SQQVQALQLAAARNERFALERG) (spacer peptide). The active-site Nucleophile is the Ser-222.

Belongs to the peptidase S45 family. As to quaternary structure, heterodimer of an alpha subunit and a beta subunit processed from the same precursor.

The protein resides in the periplasm. The catalysed reaction is an N-acyl-L-homoserine lactone + H2O = L-homoserine lactone + a carboxylate. In terms of biological role, catalyzes the deacylation of acyl-homoserine lactone (AHL or acyl-HSL), releasing homoserine lactone (HSL) and the corresponding fatty acid. Possesses a specificity for the degradation of long-chain acyl-HSLs (side chains of 11 to 14 carbons in length). In Pseudomonas syringae pv. tomato (strain ATCC BAA-871 / DC3000), this protein is Acyl-homoserine lactone acylase PvdQ (pvdQ).